We begin with the raw amino-acid sequence, 121 residues long: Ragulator complex protein LAMTOR4 homolog (121 aa).

Residues 91–121 (TQNGATTSSSSSTSYNDAAEGNNISSSTVLA) are disordered. Residues 112–121 (NNISSSTVLA) are compositionally biased toward polar residues.

It belongs to the LAMTOR4 family. Part of the Ragulator complex.

It localises to the lysosome. Functionally, regulator of the TOR pathway, a signaling cascade that promotes cell growth in response to growth factors, energy levels, and amino acids. As part of the Ragulator complex, may activate the TOR signaling cascade in response to amino acids. The sequence is that of Ragulator complex protein LAMTOR4 homolog from Drosophila pseudoobscura pseudoobscura (Fruit fly).